Here is a 604-residue protein sequence, read N- to C-terminus: Glucoamylase 1 (604 aa).

The signal sequence occupies residues 1–25 (MQLFNLPLKVSFFLVLSYFSLLVSA). The segment at 26–115 (ASIPSSASVQ…EFYIKYEVSG (90 aa)) is adsorption to raw starch. Residues 26-130 (ASIPSSASVQ…NNNSANYQVS (105 aa)) form the CBM21 domain. The tract at residues 116 to 604 (KTYYDNNNSA…SYAKAGAPAA (489 aa)) is starch degradation. The N-linked (GlcNAc...) asparagine glycan is linked to asparagine 122. The tract at residues 127–164 (YQVSTSKPTTTTATATTTTAPSTSTTTPPSRSEPATFP) is disordered. Residues 130–162 (STSKPTTTTATATTTTAPSTSTTTPPSRSEPAT) show a composition bias toward low complexity. N-linked (GlcNAc...) asparagine glycosylation is found at asparagine 167, asparagine 230, and asparagine 236. Residue tryptophan 279 coordinates substrate. Residue aspartate 336 is the Proton acceptor of the active site. Glutamate 339 acts as the Proton donor in catalysis. Asparagine 564 carries N-linked (GlcNAc...) asparagine glycosylation.

This sequence belongs to the glycosyl hydrolase 15 family.

The catalysed reaction is Hydrolysis of terminal (1-&gt;4)-linked alpha-D-glucose residues successively from non-reducing ends of the chains with release of beta-D-glucose.. The polypeptide is Glucoamylase 1 (Rhizopus oryzae (Mucormycosis agent)).